The chain runs to 432 residues: 3-phosphoshikimate 1-carboxyvinyltransferase (432 aa).

Residues lysine 22, serine 23, and arginine 27 each contribute to the 3-phosphoshikimate site. Lysine 22 is a binding site for phosphoenolpyruvate. Phosphoenolpyruvate is bound by residues glycine 96 and arginine 127. Positions 173, 174, 175, 201, 316, 339, and 343 each coordinate 3-phosphoshikimate. Glutamine 175 contributes to the phosphoenolpyruvate binding site. Aspartate 316 acts as the Proton acceptor in catalysis. Phosphoenolpyruvate contacts are provided by arginine 347, arginine 391, and lysine 416.

It belongs to the EPSP synthase family. As to quaternary structure, monomer.

It is found in the cytoplasm. It carries out the reaction 3-phosphoshikimate + phosphoenolpyruvate = 5-O-(1-carboxyvinyl)-3-phosphoshikimate + phosphate. It participates in metabolic intermediate biosynthesis; chorismate biosynthesis; chorismate from D-erythrose 4-phosphate and phosphoenolpyruvate: step 6/7. In terms of biological role, catalyzes the transfer of the enolpyruvyl moiety of phosphoenolpyruvate (PEP) to the 5-hydroxyl of shikimate-3-phosphate (S3P) to produce enolpyruvyl shikimate-3-phosphate and inorganic phosphate. This chain is 3-phosphoshikimate 1-carboxyvinyltransferase, found in Haemophilus influenzae (strain 86-028NP).